The following is a 142-amino-acid chain: MGLKLNGRYISLILAVQIAYLVQAVRAAGKCDAVFKGFSDCLLKLGDSMANYPQGLDDKTNIKTVCTYWEDFHSCTVTALTDCQEGAKDMWDKLRKESKNLNIQGSLFELCGSSNGAAGSLLPALSVLLVSLSAALATWFSF.

Residues 1–27 (MGLKLNGRYISLILAVQIAYLVQAVRA) form the signal peptide. Gly-116 carries the GPI-anchor amidated glycine lipid modification. The propeptide at 117-142 (AAGSLLPALSVLLVSLSAALATWFSF) is removed in mature form.

The protein belongs to the neuritin family. In terms of assembly, component of the outer core of AMPAR complex. AMPAR complex consists of an inner core made of 4 pore-forming GluA/GRIA proteins (GRIA1, GRIA2, GRIA3 and GRIA4) and 4 major auxiliary subunits arranged in a twofold symmetry. One of the two pairs of distinct binding sites is occupied either by CNIH2, CNIH3 or CACNG2, CACNG3. The other harbors CACNG2, CACNG3, CACNG4, CACNG8 or GSG1L. This inner core of AMPAR complex is complemented by outer core constituents binding directly to the GluA/GRIA proteins at sites distinct from the interaction sites of the inner core constituents. Outer core constituents include at least PRRT1, PRRT2, CKAMP44/SHISA9, FRRS1L and NRN1. The proteins of the inner and outer core serve as a platform for other, more peripherally associated AMPAR constituents. Alone or in combination, these auxiliary subunits control the gating and pharmacology of the AMPAR complex and profoundly impact their biogenesis and protein processing. In terms of tissue distribution, expressed in the brain (at protein level).

It is found in the cell membrane. Its subcellular location is the synapse. Its function is as follows. Promotes neurite outgrowth and especially branching of neuritic processes in primary hippocampal and cortical cells. The polypeptide is Neuritin (Nrn1) (Mus musculus (Mouse)).